The primary structure comprises 366 residues: GTP cyclohydrolase 1 type 2 homolog (366 aa).

Zn(2+)-binding residues include His-64, His-65, Asp-102, His-326, and Glu-329.

It belongs to the GTP cyclohydrolase I type 2/NIF3 family. In terms of assembly, homohexamer.

The protein is GTP cyclohydrolase 1 type 2 homolog of Staphylococcus aureus (strain COL).